The chain runs to 369 residues: Capsid protein (369 aa).

The protein resides in the host nucleus. It localises to the virion. Self-assembles to form the virion icosahedral capsid. This chain is Capsid protein, found in Avon-Heathcote Estuary associated kieseladnavirus (AHEaBV).